The following is a 631-amino-acid chain: Serine/threonine-protein kinase PLK3 (631 aa).

Residues 1–59 form a disordered region; sequence MEPAAGFLSPRPFPRAAVPSAPPAGPGPPANASPRSEPEVLAGPRAPDPPGRLITDPLS. Pro residues predominate over residues 20–31; it reads SAPPAGPGPPAN. A Protein kinase domain is found at 63–315; sequence YTKGRLLGKG…IEQILRHDFF (253 aa). Residues 69–77 and Lys-92 each bind ATP; that span reads LGKGGFARC. Asp-186 acts as the Proton acceptor in catalysis. POLO box domains are found at residues 448 to 526 and 547 to 630; these read WVSK…YMEQ and LLLQ…DQSP.

Belongs to the protein kinase superfamily. Ser/Thr protein kinase family. CDC5/Polo subfamily. In terms of assembly, interacts (via the POLO-box domain) with CIB1; leading to inhibit PLK3 kinase activity. Interacts with GOLGB1. Post-translationally, phosphorylated in an ATM-dependent manner following DNA damage. Phosphorylated as cells enter mitosis and dephosphorylated as cells exit mitosis. In terms of tissue distribution, expressed in skin.

It localises to the cytoplasm. The protein resides in the nucleus. Its subcellular location is the nucleolus. It is found in the golgi apparatus. The protein localises to the cytoskeleton. It localises to the microtubule organizing center. The protein resides in the centrosome. It catalyses the reaction L-seryl-[protein] + ATP = O-phospho-L-seryl-[protein] + ADP + H(+). The enzyme catalyses L-threonyl-[protein] + ATP = O-phospho-L-threonyl-[protein] + ADP + H(+). Functionally, serine/threonine-protein kinase involved in cell cycle regulation, response to stress and Golgi disassembly. Polo-like kinases act by binding and phosphorylating proteins that are already phosphorylated on a specific motif recognized by the POLO box domains. Phosphorylates ATF2, BCL2L1, CDC25A, CDC25C, CHEK2, HIF1A, JUN, p53/TP53, p73/TP73, PTEN, TOP2A and VRK1. Involved in cell cycle regulation: required for entry into S phase and cytokinesis. Phosphorylates BCL2L1, leading to regulate the G2 checkpoint and progression to cytokinesis during mitosis. Plays a key role in response to stress: rapidly activated upon stress stimulation, such as ionizing radiation, reactive oxygen species (ROS), hyperosmotic stress, UV irradiation and hypoxia. Involved in DNA damage response and G1/S transition checkpoint by phosphorylating CDC25A, p53/TP53 and p73/TP73. Phosphorylates p53/TP53 in response to reactive oxygen species (ROS), thereby promoting p53/TP53-mediated apoptosis. Phosphorylates CHEK2 in response to DNA damage, promoting the G2/M transition checkpoint. Phosphorylates the transcription factor p73/TP73 in response to DNA damage, leading to inhibit p73/TP73-mediated transcriptional activation and pro-apoptotic functions. Phosphorylates HIF1A and JUN is response to hypoxia. Phosphorylates ATF2 following hyperosmotic stress in corneal epithelium. Also involved in Golgi disassembly during the cell cycle: part of a MEK1/MAP2K1-dependent pathway that induces Golgi fragmentation during mitosis by mediating phosphorylation of VRK1. May participate in endomitotic cell cycle, a form of mitosis in which both karyokinesis and cytokinesis are interrupted and is a hallmark of megakaryocyte differentiation, via its interaction with CIB1. The polypeptide is Serine/threonine-protein kinase PLK3 (Plk3) (Mus musculus (Mouse)).